Reading from the N-terminus, the 321-residue chain is tRNA U34 carboxymethyltransferase (321 aa).

Carboxy-S-adenosyl-L-methionine is bound by residues K90, W104, K109, G129, 151–153 (DPT), 180–181 (IE), M195, Y199, and R314.

The protein belongs to the class I-like SAM-binding methyltransferase superfamily. CmoB family. In terms of assembly, homotetramer.

The catalysed reaction is carboxy-S-adenosyl-L-methionine + 5-hydroxyuridine(34) in tRNA = 5-carboxymethoxyuridine(34) in tRNA + S-adenosyl-L-homocysteine + H(+). Functionally, catalyzes carboxymethyl transfer from carboxy-S-adenosyl-L-methionine (Cx-SAM) to 5-hydroxyuridine (ho5U) to form 5-carboxymethoxyuridine (cmo5U) at position 34 in tRNAs. This Pasteurella multocida (strain Pm70) protein is tRNA U34 carboxymethyltransferase.